We begin with the raw amino-acid sequence, 938 residues long: Glutamate receptor ionotropic, NMDA 1 (938 aa).

Positions 1-18 are cleaved as a signal peptide; that stretch reads MSTMRLLTLALLFSCSVA. Over 19-559 the chain is Extracellular; sequence RAACDPKIVN…TLDSFMQPFQ (541 aa). N-linked (GlcNAc...) asparagine glycosylation is found at asparagine 61, asparagine 203, asparagine 239, asparagine 276, asparagine 300, asparagine 350, asparagine 368, asparagine 440, asparagine 471, and asparagine 491. An intrachain disulfide couples cysteine 79 to cysteine 308. Disulfide bonds link cysteine 420–cysteine 454 and cysteine 436–cysteine 455. Proline 516, threonine 518, and arginine 523 together coordinate glycine. The chain crosses the membrane as a helical span at residues 560–580; the sequence is STLWLLVGLSVHVVAVMLYLL. Topologically, residues 581 to 604 are cytoplasmic; that stretch reads DRFSPFGRFKVNSEEEEEDALTLS. Residues 603–624 are pore-forming; it reads LSSAMWFSWGVLLNSGIGEGAP. The segment at residues 605–615 is an intramembrane region (discontinuously helical); that stretch reads SAMWFSWGVLL. Residues 616–627 are Cytoplasmic-facing; the sequence is NSGIGEGAPRSF. Residues 628–648 form a helical membrane-spanning segment; the sequence is SARILGMVWAGFAMIIVASYT. The Extracellular segment spans residues 649–811; the sequence is ANLAAFLVLD…SNAPATLTFE (163 aa). Residue asparagine 674 is glycosylated (N-linked (GlcNAc...) asparagine). Positions 688 and 732 each coordinate glycine. Cysteine 744 and cysteine 798 are joined by a disulfide. Asparagine 771 is a glycosylation site (N-linked (GlcNAc...) asparagine). The chain crosses the membrane as a helical span at residues 812–835; the sequence is NMAGVFMLVAGGIVAGIFLIFIEI. The Cytoplasmic portion of the chain corresponds to 836–938; sequence AYKRHKDARR…LQLCSRHRES (103 aa). 4 positions are modified to phosphoserine; by PKC: serine 889, serine 890, serine 896, and serine 897. Positions 889 to 938 are disordered; the sequence is SSFKRRRSSKDTSTGGGRGALQNQKDTVLPRRAIEREEGQLQLCSRHRES. The segment covering 916 to 927 has biased composition (basic and acidic residues); it reads VLPRRAIEREEG.

It belongs to the glutamate-gated ion channel (TC 1.A.10.1) family. NR1/GRIN1 subfamily. In terms of assembly, heterotetramer; the NMDAR subunits are modular and harbor tiered domains that function in concert to regulate opening and closing of the cation-selective ion channel pore. Forms heterotetrameric channels composed of two GluN1/zeta subunits (GRIN1), and two identical GluN2/epsilon subunits (GRIN2A, GRIN2B, GRIN2C or GRIN2D) or GluN3 subunits (GRIN3A or GRIN3B) (in vitro). Can also form heterotetrameric channels that contain at least two GluN1 subunits and at least two different GluN2 subunits (or a combination of one GluN2 and one GluN3 subunits) (in vitro). In vivo, the subunit composition may vary in function of the expression levels of the different subunits. Found in a complex with GRIN2A or GRIN2B, GRIN3A and PPP2CB. Found in a complex with GRIN2A or GRIN2B and GRIN3B. Interacts with SNX27 (via PDZ domain); the interaction is required for recycling to the plasma membrane when endocytosed and prevent degradation in lysosomes. Interacts with DLG4 and MPDZ. Interacts with LRFN1 and LRFN2. Interacts with MYZAP. Found in a complex with DLG4 and PRR7. Found in a complex with GRIN2B and PRR7. Interacts with PRR7; the interaction is reduced following NMDA receptor activity. In terms of processing, NMDA is probably regulated by C-terminal phosphorylation of an isoform of GRIN1 by PKC. Dephosphorylated on Ser-897 probably by protein phosphatase 2A (PPP2CB). Its phosphorylated state is influenced by the formation of the NMDAR-PPP2CB complex and the NMDAR channel activity.

The protein localises to the cell membrane. It localises to the postsynaptic cell membrane. Its subcellular location is the postsynaptic density membrane. The protein resides in the synaptic cell membrane. It catalyses the reaction Ca(2+)(in) = Ca(2+)(out). The catalysed reaction is Na(+)(in) = Na(+)(out). The enzyme catalyses K(+)(in) = K(+)(out). Its activity is regulated as follows. NMDA glutamate receptor activity is inhbited by Mg2(+) in a voltage-dependent manner; Mg2(+)-induced blockade occurs only at negative potentials and decreases with membrane depolarization. 7-chlorokynurenate (50 uM) or Zn2(+) (100 uM) partially inhibit the NMDA glutamate receptor activity, while acide 2-amino-5-phosphonovalerique(100 uM) almost completely blocked the NMDA glutamate receptor activity. Dizocilpine (1 uM) results in long lasting and almost complete block of the NMDA glutamate receptor activity. Component of N-methyl-D-aspartate (NMDA) receptors (NMDARs) that function as heterotetrameric, ligand-gated cation channels with high calcium permeability and voltage-dependent block by Mg(2+). NMDARs participate in synaptic plasticity for learning and memory formation by contributing to the long-term potentiation (LTP). Channel activation requires binding of the neurotransmitter L-glutamate to the GluN2 subunit, glycine or D-serine binding to the GluN1 subunit, plus membrane depolarization to eliminate channel inhibition by Mg(2+). NMDARs mediate simultaneously the potasium efflux and the influx of calcium and sodium. Each GluN2 or GluN3 subunit confers differential attributes to channel properties, including activation, deactivation and desensitization kinetics, pH sensitivity, Ca2(+) permeability, and binding to allosteric modulators. This Homo sapiens (Human) protein is Glutamate receptor ionotropic, NMDA 1.